A 190-amino-acid polypeptide reads, in one-letter code: MNNNLQGDAIAAAIDVLNEERVIAYPTEAVFGVGCDPDSETAVMRLLELKQRPVDKGLILIAANYEQLKPYIDDTMLTDAQRETIFSRWPGPVTFVFPAPATTPRWLTGRFDSLAVRVTDHPLVVALCQAYGKPLVSTSANLSGLPPCRTVDEVRAQFGAAFPVVLGETGGRLNPSEIRDALTGELFRQG.

Residues 7-190 (GDAIAAAIDV…ALTGELFRQG (184 aa)) enclose the YrdC-like domain.

The protein belongs to the SUA5 family. TsaC subfamily.

The protein localises to the cytoplasm. The catalysed reaction is L-threonine + hydrogencarbonate + ATP = L-threonylcarbamoyladenylate + diphosphate + H2O. Functionally, required for the formation of a threonylcarbamoyl group on adenosine at position 37 (t(6)A37) in tRNAs that read codons beginning with adenine. Catalyzes the conversion of L-threonine, HCO(3)(-)/CO(2) and ATP to give threonylcarbamoyl-AMP (TC-AMP) as the acyladenylate intermediate, with the release of diphosphate. This chain is Threonylcarbamoyl-AMP synthase, found in Shigella boydii serotype 4 (strain Sb227).